Reading from the N-terminus, the 596-residue chain is Alkaline phosphatase 4 (596 aa).

Residues 1 to 20 (MHCLVILGFLLGSLVAFSWA) form the signal peptide. Mg(2+) is bound at residue D93. D93 is a Zn(2+) binding site. Catalysis depends on S144, which acts as the Phosphoserine intermediate. Mg(2+) is bound by residues H202 and T204. N262 and N297 each carry an N-linked (GlcNAc...) asparagine glycan. E369 contacts Mg(2+). Zn(2+)-binding residues include D374 and H378. N401 carries N-linked (GlcNAc...) asparagine glycosylation. D415 and H416 together coordinate Zn(2+). N-linked (GlcNAc...) asparagine glycans are attached at residues N464 and N470. A Zn(2+)-binding site is contributed by H504. Cysteines 539 and 550 form a disulfide. Residues 548–566 (DSCEDHKDGQKDRPLDKPN) are compositionally biased toward basic and acidic residues. Residues 548–570 (DSCEDHKDGQKDRPLDKPNPKRN) form a disordered region. N570 carries the GPI-anchor amidated asparagine lipid modification. Residues 571-591 (GATVVGASLIPILTAATAAIL) form a helical membrane-spanning segment. Positions 571 to 596 (GATVVGASLIPILTAATAAILRGRGL) are cleaved as a propeptide — removed in mature form.

The protein belongs to the alkaline phosphatase family. As to quaternary structure, homodimer. Requires Mg(2+) as cofactor. The cofactor is Zn(2+). As to expression, ellipsoid body ring neurons in the adult brain and in the lower Malpighian tubule and ureter.

Its subcellular location is the cell membrane. It catalyses the reaction a phosphate monoester + H2O = an alcohol + phosphate. Functionally, important role in neural and renal epithelial function. The protein is Alkaline phosphatase 4 of Drosophila melanogaster (Fruit fly).